A 214-amino-acid chain; its full sequence is Probable transaldolase (214 aa).

Lys83 (schiff-base intermediate with substrate) is an active-site residue.

The protein belongs to the transaldolase family. Type 3B subfamily.

The protein localises to the cytoplasm. It carries out the reaction D-sedoheptulose 7-phosphate + D-glyceraldehyde 3-phosphate = D-erythrose 4-phosphate + beta-D-fructose 6-phosphate. It functions in the pathway carbohydrate degradation; pentose phosphate pathway; D-glyceraldehyde 3-phosphate and beta-D-fructose 6-phosphate from D-ribose 5-phosphate and D-xylulose 5-phosphate (non-oxidative stage): step 2/3. Its function is as follows. Transaldolase is important for the balance of metabolites in the pentose-phosphate pathway. The chain is Probable transaldolase from Leptospira borgpetersenii serovar Hardjo-bovis (strain JB197).